The primary structure comprises 104 residues: Large ribosomal subunit protein uL24 (104 aa).

The protein belongs to the universal ribosomal protein uL24 family. In terms of assembly, part of the 50S ribosomal subunit.

One of two assembly initiator proteins, it binds directly to the 5'-end of the 23S rRNA, where it nucleates assembly of the 50S subunit. In terms of biological role, one of the proteins that surrounds the polypeptide exit tunnel on the outside of the subunit. This chain is Large ribosomal subunit protein uL24, found in Rhodopseudomonas palustris (strain BisB5).